Here is a 77-residue protein sequence, read N- to C-terminus: DNA-directed RNA polymerase subunit epsilon (77 aa).

The protein belongs to the RNA polymerase subunit epsilon family. In terms of assembly, RNAP is composed of a core of 2 alpha, a beta and a beta' subunit. The core is associated with a delta subunit, and at least one of epsilon or omega. When a sigma factor is associated with the core the holoenzyme is formed, which can initiate transcription.

The catalysed reaction is RNA(n) + a ribonucleoside 5'-triphosphate = RNA(n+1) + diphosphate. In terms of biological role, a non-essential component of RNA polymerase (RNAP). This chain is DNA-directed RNA polymerase subunit epsilon, found in Streptococcus pneumoniae serotype 2 (strain D39 / NCTC 7466).